Consider the following 393-residue polypeptide: NAD(P)H-quinone oxidoreductase subunit H, chloroplastic (393 aa).

The protein belongs to the complex I 49 kDa subunit family. NDH is composed of at least 16 different subunits, 5 of which are encoded in the nucleus.

The protein resides in the plastid. Its subcellular location is the chloroplast thylakoid membrane. It carries out the reaction a plastoquinone + NADH + (n+1) H(+)(in) = a plastoquinol + NAD(+) + n H(+)(out). It catalyses the reaction a plastoquinone + NADPH + (n+1) H(+)(in) = a plastoquinol + NADP(+) + n H(+)(out). NDH shuttles electrons from NAD(P)H:plastoquinone, via FMN and iron-sulfur (Fe-S) centers, to quinones in the photosynthetic chain and possibly in a chloroplast respiratory chain. The immediate electron acceptor for the enzyme in this species is believed to be plastoquinone. Couples the redox reaction to proton translocation, and thus conserves the redox energy in a proton gradient. This Saccharum hybrid (Sugarcane) protein is NAD(P)H-quinone oxidoreductase subunit H, chloroplastic.